Here is a 665-residue protein sequence, read N- to C-terminus: UvrABC system protein B (665 aa).

Residues 25–412 form the Helicase ATP-binding domain; it reads ASIEGGNRYQ…ENRIVEQVIR (388 aa). 38 to 45 provides a ligand contact to ATP; that stretch reads GATGTGKT. Residues 91–114 carry the Beta-hairpin motif; sequence YYDYYQPEAYIPVTDTYIEKTAAI. Residues 429–583 form the Helicase C-terminal domain; that stretch reads QIDDLLGEIK…VAYNKLHGIT (155 aa). The 36-residue stretch at 626-661 folds into the UVR domain; that stretch reads PNLIDKLEAQMKEASKKLEFEEAAKLRDRIKQLRDK.

Belongs to the UvrB family. In terms of assembly, forms a heterotetramer with UvrA during the search for lesions. Interacts with UvrC in an incision complex.

It is found in the cytoplasm. Functionally, the UvrABC repair system catalyzes the recognition and processing of DNA lesions. A damage recognition complex composed of 2 UvrA and 2 UvrB subunits scans DNA for abnormalities. Upon binding of the UvrA(2)B(2) complex to a putative damaged site, the DNA wraps around one UvrB monomer. DNA wrap is dependent on ATP binding by UvrB and probably causes local melting of the DNA helix, facilitating insertion of UvrB beta-hairpin between the DNA strands. Then UvrB probes one DNA strand for the presence of a lesion. If a lesion is found the UvrA subunits dissociate and the UvrB-DNA preincision complex is formed. This complex is subsequently bound by UvrC and the second UvrB is released. If no lesion is found, the DNA wraps around the other UvrB subunit that will check the other stand for damage. In Nostoc sp. (strain PCC 7120 / SAG 25.82 / UTEX 2576), this protein is UvrABC system protein B.